We begin with the raw amino-acid sequence, 224 residues long: F420-dependent NADP reductase (224 aa).

NADP(+) is bound by residues T9 to Q12, S31 to R32, K36, V74, V100, and A145.

This sequence belongs to the F420-dependent NADP reductase family. Homotetramer.

The catalysed reaction is reduced coenzyme F420-(gamma-L-Glu)(n) + NADP(+) = oxidized coenzyme F420-(gamma-L-Glu)(n) + NADPH + 2 H(+). Functionally, catalyzes the reduction of NADP(+) with F420H(2) via hydride transfer, and the reverse reaction, i.e. the reduction of F420 with NADPH. Probably functions in the regeneration of NADPH required in biosynthetic reactions. In Methanothermobacter marburgensis (strain ATCC BAA-927 / DSM 2133 / JCM 14651 / NBRC 100331 / OCM 82 / Marburg) (Methanobacterium thermoautotrophicum), this protein is F420-dependent NADP reductase.